The chain runs to 478 residues: PRAME family member 15 (478 aa).

An LRR 1; degenerate repeat occupies 99–126 (RWKLQVLDLQDVCENFWMVWSEAMAHGC). The LRR 2; degenerate repeat unit spans residues 181-205 (HLCCKKLKILGMPFRNIRSILKMVN). An LRR 3; degenerate repeat occupies 206–232 (LDCIQEVEVNCKWVLPILTQFTPYLGH). One copy of the LRR 4; degenerate repeat lies at 233-268 (MRNLQKLVLSHMDVSRYVSPEQKKEIVTQFTTQFLK). LRR repeat units follow at residues 269–294 (LRCL…LSCL), 295–326 (KTSL…SQLK), 327–347 (TLDL…QILL), 351–378 (AATL…ALSR), and 379–403 (CFEL…LLSH).

This sequence belongs to the PRAME family.

The chain is PRAME family member 15 from Homo sapiens (Human).